Reading from the N-terminus, the 131-residue chain is D-ribose pyranase (131 aa).

Residue H20 is the Proton donor of the active site. Substrate is bound by residues D28, H98, and 120 to 122; that span reads YAN.

Belongs to the RbsD / FucU family. RbsD subfamily. In terms of assembly, homodecamer.

It localises to the cytoplasm. The catalysed reaction is beta-D-ribopyranose = beta-D-ribofuranose. The protein operates within carbohydrate metabolism; D-ribose degradation; D-ribose 5-phosphate from beta-D-ribopyranose: step 1/2. In terms of biological role, catalyzes the interconversion of beta-pyran and beta-furan forms of D-ribose. The sequence is that of D-ribose pyranase from Enterococcus faecalis (strain ATCC 700802 / V583).